A 414-amino-acid polypeptide reads, in one-letter code: Methyl-CpG-binding domain protein 2 (414 aa).

A required for interaction with DHX9 and PRMT5 region spans residues Met-1–Arg-152. Residues Met-1–Lys-163 form a disordered region. Over residues Gly-77 to Gly-95 the composition is skewed to basic residues. Positions Gln-98 to Val-123 are enriched in gly residues. The MBD domain occupies Glu-148–Met-216. Position 184 is a phosphoserine (Ser-184). A disordered region spans residues Met-217 to Thr-244. A compositionally biased stretch (polar residues) spans Pro-232–Thr-244. Ser-410 carries the phosphoserine modification.

Heterodimer with MBD3 (via N-terminus). Component of the MeCP1 complex that contains HDAC1 and HDAC2. Component of the nucleosome remodeling and deacetylase (NuRD) repressor complex, composed of core proteins MTA1, MTA2, MTA3, RBBP4, RBBP7, HDAC1, HDAC2, MBD2, MBD3, and peripherally associated proteins CDK2AP1, CDK2AP2, GATAD2A, GATAD2B, CHD3, CHD4 and CHD5. The exact stoichiometry of the NuRD complex is unknown, and some subunits such as MBD2 and MBD3, GATAD2A and GATAD2B, and CHD3, CHD4 and CHD5 define mutually exclusive NuRD complexes. Interacts with CDK2AP1. Interacts with DHX9. Interacts with DNMT1. Interacts with GATAD2A/p66-alpha. Interacts with GATAD2B/p66-beta. Interacts with GPN1. Interacts with MIZF. Interacts with PRMT5. Interacts with SIN3A. Interacts with SPHK2. As to expression, highly expressed in brain, heart, kidney, lung, skeletal muscle, spleen and testis. Detected at lower levels in embryonic stem cells.

The protein resides in the nucleus. It is found in the chromosome. Binds CpG islands in promoters where the DNA is methylated at position 5 of cytosine within CpG dinucleotides. Binds hemimethylated DNA as well. Recruits histone deacetylases and DNA methyltransferases to chromatin. Acts as a component of the histone deacetylase NuRD complex which participates in the remodeling of chromatin. Acts as transcriptional repressor and plays a role in gene silencing. Functions as a scaffold protein, targeting GATAD2A and GATAD2B to chromatin to promote repression. May enhance the activation of some unmethylated cAMP-responsive promoters. Selectively represses transcription activity of methylated rRNA promoters. In Mus musculus (Mouse), this protein is Methyl-CpG-binding domain protein 2.